An 82-amino-acid chain; its full sequence is Defensin-like protein 22 (82 aa).

Positions 1-24 are cleaved as a signal peptide; that stretch reads MAGLKVFSFALLLILTFSLIDVEG. Cystine bridges form between cysteine 34–cysteine 82, cysteine 44–cysteine 69, cysteine 53–cysteine 78, and cysteine 57–cysteine 80.

This sequence belongs to the DEFL family.

The protein resides in the secreted. The sequence is that of Defensin-like protein 22 from Arabidopsis thaliana (Mouse-ear cress).